The sequence spans 101 residues: Cell division suppressor protein YneA (101 aa).

One can recognise a LysM domain in the interval 35–86; the sequence is MTVTVASGDTLWGLAKQYEPAHGLSPDEFIRWVVDVNRLPSSRLTAGEQIVI.

The protein belongs to the YneA family.

The protein resides in the cytoplasm. Functionally, inhibits cell division during the SOS response. Affects a later stage of the cell division protein assembly, after the assembly of the Z ring, by probably suppressing recruitment of FtsL and/or DivIC to the division machinery. The sequence is that of Cell division suppressor protein YneA from Geobacillus thermodenitrificans (strain NG80-2).